A 97-amino-acid chain; its full sequence is uncharacterized protein (97 aa).

3 consecutive transmembrane segments (helical) span residues Cys-7–Gly-27, Ile-34–Ser-54, and Ile-69–Leu-89.

Its subcellular location is the cell membrane. This is an uncharacterized protein from Haemophilus influenzae (strain ATCC 51907 / DSM 11121 / KW20 / Rd).